The following is a 196-amino-acid chain: Probable nicotinate-nucleotide adenylyltransferase (196 aa).

This sequence belongs to the NadD family.

The catalysed reaction is nicotinate beta-D-ribonucleotide + ATP + H(+) = deamido-NAD(+) + diphosphate. It participates in cofactor biosynthesis; NAD(+) biosynthesis; deamido-NAD(+) from nicotinate D-ribonucleotide: step 1/1. Its function is as follows. Catalyzes the reversible adenylation of nicotinate mononucleotide (NaMN) to nicotinic acid adenine dinucleotide (NaAD). This is Probable nicotinate-nucleotide adenylyltransferase from Thermotoga petrophila (strain ATCC BAA-488 / DSM 13995 / JCM 10881 / RKU-1).